The sequence spans 296 residues: 4-hydroxy-tetrahydrodipicolinate synthase (296 aa).

Position 50 (Thr50) interacts with pyruvate. Catalysis depends on Tyr138, which acts as the Proton donor/acceptor. The active-site Schiff-base intermediate with substrate is Lys166. Ile208 lines the pyruvate pocket.

The protein belongs to the DapA family. As to quaternary structure, homotetramer; dimer of dimers.

It localises to the cytoplasm. It carries out the reaction L-aspartate 4-semialdehyde + pyruvate = (2S,4S)-4-hydroxy-2,3,4,5-tetrahydrodipicolinate + H2O + H(+). It functions in the pathway amino-acid biosynthesis; L-lysine biosynthesis via DAP pathway; (S)-tetrahydrodipicolinate from L-aspartate: step 3/4. In terms of biological role, catalyzes the condensation of (S)-aspartate-beta-semialdehyde [(S)-ASA] and pyruvate to 4-hydroxy-tetrahydrodipicolinate (HTPA). This chain is 4-hydroxy-tetrahydrodipicolinate synthase, found in Ruthia magnifica subsp. Calyptogena magnifica.